Reading from the N-terminus, the 397-residue chain is Phosphopentomutase (397 aa).

The Mn(2+) site is built by D10, D296, H301, D337, H338, and H349.

This sequence belongs to the phosphopentomutase family. Mn(2+) is required as a cofactor.

Its subcellular location is the cytoplasm. It catalyses the reaction 2-deoxy-alpha-D-ribose 1-phosphate = 2-deoxy-D-ribose 5-phosphate. It carries out the reaction alpha-D-ribose 1-phosphate = D-ribose 5-phosphate. It functions in the pathway carbohydrate degradation; 2-deoxy-D-ribose 1-phosphate degradation; D-glyceraldehyde 3-phosphate and acetaldehyde from 2-deoxy-alpha-D-ribose 1-phosphate: step 1/2. Isomerase that catalyzes the conversion of deoxy-ribose 1-phosphate (dRib-1-P) and ribose 1-phosphate (Rib-1-P) to deoxy-ribose 5-phosphate (dRib-5-P) and ribose 5-phosphate (Rib-5-P), respectively. This chain is Phosphopentomutase, found in Elusimicrobium minutum (strain Pei191).